The following is a 157-amino-acid chain: Transcriptional repressor NrdR (157 aa).

Residues 3–34 fold into a zinc finger; sequence CPFCSATDTKVIDSRLVADGHQVRRRRECLLC. Residues 49–139 enclose the ATP-cone domain; it reads PRVVKQDGSR…VYRAFEDVSE (91 aa).

Belongs to the NrdR family. Zn(2+) is required as a cofactor.

Negatively regulates transcription of bacterial ribonucleotide reductase nrd genes and operons by binding to NrdR-boxes. The polypeptide is Transcriptional repressor NrdR (Shewanella loihica (strain ATCC BAA-1088 / PV-4)).